The following is a 582-amino-acid chain: Kelch-like protein diablo (582 aa).

Positions 1-22 (MGDVLISDRPPSPARLSHTSEK) are disordered. A BTB domain is found at 41 to 108 (CDVVINVSGR…CYTSHIVVEE (68 aa)). A BACK domain is found at 143–245 (CLGIRAFADT…SPKFLVGTVG (103 aa)). 6 Kelch repeats span residues 292–338 (VLFA…VLND), 340–386 (LYAV…VLDG), 387–433 (FLYA…VLGG), 435–480 (LYAI…VFNN), 482–527 (IYAV…VVNG), and 528–574 (QLYA…VMRA).

Its pathway is protein modification; protein ubiquitination. Probable substrate-specific adapter of an E3 ubiquitin-protein ligase complex which mediates the ubiquitination and subsequent proteasomal degradation of target proteins. May have a role in synapse differentiation and growth. The polypeptide is Kelch-like protein diablo (Culex quinquefasciatus (Southern house mosquito)).